The sequence spans 371 residues: uncharacterized protein (371 aa).

To A.pernix APE_1804 and S.solfataricus SSO2105.

This is an uncharacterized protein from Aeropyrum pernix (strain ATCC 700893 / DSM 11879 / JCM 9820 / NBRC 100138 / K1).